A 307-amino-acid polypeptide reads, in one-letter code: Ornithine carbamoyltransferase (307 aa).

Carbamoyl phosphate contacts are provided by residues 50-53, Q77, R101, and 128-131; these read STRT and HPCQ. Residues N160, D224, and 228-229 each bind L-ornithine; that span reads SM. Residues 264-265 and R292 contribute to the carbamoyl phosphate site; that span reads CL.

It belongs to the aspartate/ornithine carbamoyltransferase superfamily. OTCase family.

It is found in the cytoplasm. It catalyses the reaction carbamoyl phosphate + L-ornithine = L-citrulline + phosphate + H(+). Its pathway is amino-acid biosynthesis; L-arginine biosynthesis; L-arginine from L-ornithine and carbamoyl phosphate: step 1/3. Reversibly catalyzes the transfer of the carbamoyl group from carbamoyl phosphate (CP) to the N(epsilon) atom of ornithine (ORN) to produce L-citrulline. The protein is Ornithine carbamoyltransferase of Clavibacter michiganensis subsp. michiganensis (strain NCPPB 382).